An 818-amino-acid chain; its full sequence is Response regulator SSK1 (818 aa).

Residues 611–769 (NVLIVEDNPI…WLERKVMEWG (159 aa)) form the Response regulatory domain. 4-aspartylphosphate is present on aspartate 660.

The protein belongs to the SSK1 family.

It localises to the cytoplasm. Its function is as follows. Two-domain response regulator protein in the two-component signal transduction system of the HOG1 pathway. Modulates stress response, melanin biosynthesis and virulence via its regulation of the phosphorylation of HOG1. This Verticillium dahliae (strain VdLs.17 / ATCC MYA-4575 / FGSC 10137) (Verticillium wilt) protein is Response regulator SSK1.